The following is a 237-amino-acid chain: Lectin (237 aa).

The Mn(2+) site is built by Glu8 and Asp10. Residues Asp10, Tyr12, Asn14, and Asp19 each contribute to the Ca(2+) site. Positions 12 and 14 each coordinate a carbohydrate. Asp19 and His24 together coordinate Mn(2+). An a carbohydrate-binding site is contributed by 98-100 (GLY). Asp208 is a binding site for Ca(2+). Positions 227 and 228 each coordinate a carbohydrate.

Belongs to the leguminous lectin family. Homotetramer; dimer of dimers. Post-translationally, concanavalin A-like lectins of the Diocleinae subtribe undergo proteolytic processing referred to as circular permutation. The propeptide is split into an N-terminal and a C-terminal part, the gamma and beta chain, respectively. These are then religated in beta-gamma order to form the mature alpha chain. The beta and gamma chains can often be detected in cell extracts. Residues 1-118 of the mature chain, as displayed here, probably constitute the beta chain in the propeptide, residues 119-237 the gamma chain.

D-mannose/D-glucose-binding lectin with hemagglutinating activity towards rabbit and human erythrocytes. In rats, induces dose-dependent paw edema. Has low cytotoxicity against Artemisia sp. This chain is Lectin, found in Macropsychanthus comosus (Sea purse).